We begin with the raw amino-acid sequence, 712 residues long: WD repeat-containing protein 91 (712 aa).

Positions arginine 148 to glutamine 180 form a coiled coil. The residue at position 221 (serine 221) is a Phosphoserine. Residues leucine 230 to proline 243 are compositionally biased toward low complexity. The tract at residues leucine 230 to threonine 336 is disordered. Residues serine 253 and serine 258 each carry the phosphoserine modification. A compositionally biased stretch (basic and acidic residues) spans arginine 297–leucine 308. WD repeat units lie at residues glutamate 371–alanine 410, isoleucine 413–glutamate 453, alanine 480–glutamine 520, proline 525–serine 564, alanine 567–serine 606, valine 629–glutamate 667, and glycine 674–alanine 712.

This sequence belongs to the WD repeat WDR91 family. As to quaternary structure, interacts with WDR81; involved in early to late endosome cargo transport. Interacts with BECN1; negatively regulates the PI3 kinase/PI3K activity associated with endosomal membranes.

It is found in the early endosome membrane. The protein localises to the late endosome membrane. Functions as a negative regulator of the PI3 kinase/PI3K activity associated with endosomal membranes via BECN1, a core subunit of the PI3K complex. By modifying the phosphatidylinositol 3-phosphate/PtdInsP3 content of endosomal membranes may regulate endosome fusion, recycling, sorting and early to late endosome transport. It is for instance, required for the delivery of cargos like BST2/tetherin from early to late endosome and thereby participates indirectly to their degradation by the lysosome. May play a role in meiosis. The polypeptide is WD repeat-containing protein 91 (Pongo abelii (Sumatran orangutan)).